A 423-amino-acid polypeptide reads, in one-letter code: GPI mannosyltransferase 2 (423 aa).

Transmembrane regions (helical) follow at residues Ile-11–Gly-31, Trp-106–Leu-126, Leu-139–Pro-159, Tyr-160–Leu-180, Gly-197–Val-219, Leu-240–Leu-260, Tyr-299–Leu-319, Leu-351–Ile-371, and Gly-400–Leu-420.

This sequence belongs to the PIGV family.

It localises to the endoplasmic reticulum membrane. It participates in glycolipid biosynthesis; glycosylphosphatidylinositol-anchor biosynthesis. Mannosyltransferase involved in glycosylphosphatidylinositol-anchor biosynthesis. Transfers the second mannose to the glycosylphosphatidylinositol during GPI precursor assembly. The chain is GPI mannosyltransferase 2 (GPI18) from Gibberella zeae (strain ATCC MYA-4620 / CBS 123657 / FGSC 9075 / NRRL 31084 / PH-1) (Wheat head blight fungus).